The chain runs to 366 residues: 3-dehydroquinate synthase (366 aa).

Residues 69–74 (DGEAYK), 103–107 (GVIGD), 127–128 (TT), K140, and K149 contribute to the NAD(+) site. Residues E182, H245, and H262 each contribute to the Zn(2+) site.

Belongs to the sugar phosphate cyclases superfamily. Dehydroquinate synthase family. Co(2+) serves as cofactor. The cofactor is Zn(2+). NAD(+) is required as a cofactor.

Its subcellular location is the cytoplasm. The catalysed reaction is 7-phospho-2-dehydro-3-deoxy-D-arabino-heptonate = 3-dehydroquinate + phosphate. The protein operates within metabolic intermediate biosynthesis; chorismate biosynthesis; chorismate from D-erythrose 4-phosphate and phosphoenolpyruvate: step 2/7. Catalyzes the conversion of 3-deoxy-D-arabino-heptulosonate 7-phosphate (DAHP) to dehydroquinate (DHQ). The sequence is that of 3-dehydroquinate synthase from Pseudomonas fluorescens (strain ATCC BAA-477 / NRRL B-23932 / Pf-5).